A 180-amino-acid polypeptide reads, in one-letter code: Adenine phosphoribosyltransferase (180 aa).

It belongs to the purine/pyrimidine phosphoribosyltransferase family. As to quaternary structure, homodimer.

It is found in the cytoplasm. It catalyses the reaction AMP + diphosphate = 5-phospho-alpha-D-ribose 1-diphosphate + adenine. The protein operates within purine metabolism; AMP biosynthesis via salvage pathway; AMP from adenine: step 1/1. Its function is as follows. Catalyzes a salvage reaction resulting in the formation of AMP, that is energically less costly than de novo synthesis. This chain is Adenine phosphoribosyltransferase, found in Mannheimia succiniciproducens (strain KCTC 0769BP / MBEL55E).